Here is a 344-residue protein sequence, read N- to C-terminus: Fructose-1,6-bisphosphatase class 1 (344 aa).

4 residues coordinate Mg(2+): E90, D109, L111, and D112. Residues 112 to 115 (DGSS) and N200 contribute to the substrate site. E271 serves as a coordination point for Mg(2+).

Belongs to the FBPase class 1 family. As to quaternary structure, homotetramer. It depends on Mg(2+) as a cofactor.

It is found in the cytoplasm. It carries out the reaction beta-D-fructose 1,6-bisphosphate + H2O = beta-D-fructose 6-phosphate + phosphate. It functions in the pathway carbohydrate biosynthesis; gluconeogenesis. The sequence is that of Fructose-1,6-bisphosphatase class 1 from Nitrobacter vulgaris.